A 634-amino-acid chain; its full sequence is Nucleoside triphosphatase I (634 aa).

Positions 41–203 (FLGLDSMNSL…ALLVNLLRPG (163 aa)) constitute a Helicase ATP-binding domain. Position 54–61 (54–61 (QETGVGKT)) interacts with ATP. A DEXH box motif is present at residues 140 to 143 (DECH). The Helicase C-terminal domain maps to 355–531 (SLYQALYEHS…EFSQLYRVLK (177 aa)). Residues 456–523 (DIFILDMTWN…EIIQNKAREF (68 aa)) form a binding to the cap-specific mRNA (nucleoside-2'-O-)-methyltransferase region.

This sequence belongs to the helicase family. NPH I subfamily. Monomer. Interacts (via C-terminus) with RAP94 (via N-terminus). Interacts with the cap-specific mRNA (nucleoside-2'-O-)-methyltransferase.

The protein localises to the virion. The enzyme catalyses a ribonucleoside 5'-triphosphate + H2O = a ribonucleoside 5'-diphosphate + phosphate + H(+). Functionally, DNA-dependent ATPase required for providing the needed energy to achieve the termination of early transcripts. Acts in concert with the RAP94 subunit of the virion RNA polymerase and the capping enzyme/VTF to catalyze release of UUUUUNU-containing nascent RNA from the elongation complex. NPH-I must bind ssDNA in order to exhibit ATPase activity. This Homo sapiens (Human) protein is Nucleoside triphosphatase I (NPH1).